A 469-amino-acid polypeptide reads, in one-letter code: Glutamate--tRNA ligase (469 aa).

The 'HIGH' region motif lies at 10–20 (PSPTGYLHVGG). Zn(2+)-binding residues include C99, C101, C126, and D128. A 'KMSKS' region motif is present at residues 238–242 (RLSKR). An ATP-binding site is contributed by K241.

The protein belongs to the class-I aminoacyl-tRNA synthetase family. Glutamate--tRNA ligase type 1 subfamily. As to quaternary structure, monomer. Zn(2+) is required as a cofactor.

The protein localises to the cytoplasm. The catalysed reaction is tRNA(Glu) + L-glutamate + ATP = L-glutamyl-tRNA(Glu) + AMP + diphosphate. In terms of biological role, catalyzes the attachment of glutamate to tRNA(Glu) in a two-step reaction: glutamate is first activated by ATP to form Glu-AMP and then transferred to the acceptor end of tRNA(Glu). The sequence is that of Glutamate--tRNA ligase from Pelobacter propionicus (strain DSM 2379 / NBRC 103807 / OttBd1).